We begin with the raw amino-acid sequence, 158 residues long: NAD(P)H-quinone oxidoreductase subunit J, chloroplastic (158 aa).

It belongs to the complex I 30 kDa subunit family. In terms of assembly, NDH is composed of at least 16 different subunits, 5 of which are encoded in the nucleus.

Its subcellular location is the plastid. It localises to the chloroplast thylakoid membrane. It carries out the reaction a plastoquinone + NADH + (n+1) H(+)(in) = a plastoquinol + NAD(+) + n H(+)(out). The enzyme catalyses a plastoquinone + NADPH + (n+1) H(+)(in) = a plastoquinol + NADP(+) + n H(+)(out). Functionally, NDH shuttles electrons from NAD(P)H:plastoquinone, via FMN and iron-sulfur (Fe-S) centers, to quinones in the photosynthetic chain and possibly in a chloroplast respiratory chain. The immediate electron acceptor for the enzyme in this species is believed to be plastoquinone. Couples the redox reaction to proton translocation, and thus conserves the redox energy in a proton gradient. The protein is NAD(P)H-quinone oxidoreductase subunit J, chloroplastic of Lotus japonicus (Lotus corniculatus var. japonicus).